Reading from the N-terminus, the 228-residue chain is Deoxyguanosine kinase (228 aa).

8–16 (GPIGAGKSS) contacts ATP. Positions 32, 44, and 55 each coordinate substrate. The active-site Proton acceptor is the D78. 3 residues coordinate substrate: R79, D84, and E149.

This sequence belongs to the DCK/DGK family. In terms of assembly, heterodimer of a deoxyadenosine (DAK) and a deoxyguanosine kinase (DGK).

It carries out the reaction 2'-deoxyguanosine + ATP = dGMP + ADP + H(+). Functionally, DGK/DAK plays an essential role in generating the deoxyribonucleotide precursors, dGTP and dATP, for DNA metabolism. This chain is Deoxyguanosine kinase, found in Lactobacillus acidophilus (strain ATCC 700396 / NCK56 / N2 / NCFM).